We begin with the raw amino-acid sequence, 171 residues long: UPF0312 protein SAV2687 (171 aa).

Belongs to the UPF0312 family.

The protein is UPF0312 protein SAV2687 of Staphylococcus aureus (strain Mu50 / ATCC 700699).